Reading from the N-terminus, the 376-residue chain is Succinyl-diaminopimelate desuccinylase 1 (376 aa).

Position 67 (H67) interacts with Zn(2+). D69 is a catalytic residue. D100 serves as a coordination point for Zn(2+). E134 acts as the Proton acceptor in catalysis. Residues E135, E163, and H349 each contribute to the Zn(2+) site.

This sequence belongs to the peptidase M20A family. DapE subfamily. In terms of assembly, homodimer. Requires Zn(2+) as cofactor. Co(2+) is required as a cofactor.

It catalyses the reaction N-succinyl-(2S,6S)-2,6-diaminopimelate + H2O = (2S,6S)-2,6-diaminopimelate + succinate. It functions in the pathway amino-acid biosynthesis; L-lysine biosynthesis via DAP pathway; LL-2,6-diaminopimelate from (S)-tetrahydrodipicolinate (succinylase route): step 3/3. Its function is as follows. Catalyzes the hydrolysis of N-succinyl-L,L-diaminopimelic acid (SDAP), forming succinate and LL-2,6-diaminopimelate (DAP), an intermediate involved in the bacterial biosynthesis of lysine and meso-diaminopimelic acid, an essential component of bacterial cell walls. The chain is Succinyl-diaminopimelate desuccinylase 1 from Shewanella loihica (strain ATCC BAA-1088 / PV-4).